Here is a 371-residue protein sequence, read N- to C-terminus: Probable L-aspartate decarboxylase (371 aa).

At Lys-232 the chain carries N6-(pyridoxal phosphate)lysine.

The protein belongs to the group II decarboxylase family. MfnA subfamily. The cofactor is pyridoxal 5'-phosphate.

It catalyses the reaction L-aspartate + H(+) = beta-alanine + CO2. The protein operates within cofactor biosynthesis; coenzyme A biosynthesis. In terms of biological role, catalyzes the decarboxylation of L-aspartate to produce beta-alanine. The chain is Probable L-aspartate decarboxylase from Pyrococcus furiosus (strain ATCC 43587 / DSM 3638 / JCM 8422 / Vc1).